The following is a 331-amino-acid chain: Aromatic 2-oxoacid reductase (331 aa).

NAD(+) is bound by residues 154–155 (RI), Asp-175, 205–206 (AP), Asn-211, 232–234 (AAR), and Asp-258. Residue Arg-234 is part of the active site. Glu-263 is a catalytic residue. Catalysis depends on His-295, which acts as the Proton donor.

Belongs to the D-isomer specific 2-hydroxyacid dehydrogenase family.

The enzyme catalyses (R)-3-phenyllactate + NAD(+) = 3-phenylpyruvate + NADH + H(+). It catalyses the reaction (2R)-2-hydroxy-3-(4-hydroxyphenyl)propanoate + NAD(+) = 3-(4-hydroxyphenyl)pyruvate + NADH + H(+). It carries out the reaction 3-(indol-3-yl)lactate + NAD(+) = indole-3-pyruvate + NADH + H(+). It participates in amino-acid degradation. Essential for the reductive metabolism of L-phenylalanine, L-tyrosine and L-tryptophan. Catalyzes the conversion of phenylpyruvic acid to phenyllactic acid, 4-hydroxy-phenylpyruvic acid to 4-hydroxy-phenyllactic acid, and indolepyruvic acid to indolelactic acid. The sequence is that of Aromatic 2-oxoacid reductase from Clostridium sporogenes (strain ATCC 7955 / DSM 767 / NBRC 16411 / NCIMB 8053 / NCTC 8594 / PA 3679).